The chain runs to 66 residues: Large ribosomal subunit protein uL29 (66 aa).

This sequence belongs to the universal ribosomal protein uL29 family.

This Thermotoga sp. (strain RQ2) protein is Large ribosomal subunit protein uL29.